Reading from the N-terminus, the 221-residue chain is F-box protein At1g55000 (221 aa).

The 40-residue stretch at 7–46 folds into the F-box domain; it reads DTLIIIFQKLTVADLARASCVCKVWNSVATEDDLVVSAFT. Residues 74–118 form the LysM domain; that stretch reads ISHRICRGDSVTSLAVKYAVQVMDIKRLNNMMSDHGIYSRDRLLI.

Part of a SCF (ASK-cullin-F-box) protein ligase complex. Interacts with SKP1A/ASK1, SKP1B/ASK2, ASK4, ASK11 and ASK13.

It participates in protein modification; protein ubiquitination. Its function is as follows. Component of SCF(ASK-cullin-F-box) E3 ubiquitin ligase complexes, which may mediate the ubiquitination and subsequent proteasomal degradation of target proteins. The protein is F-box protein At1g55000 of Arabidopsis thaliana (Mouse-ear cress).